A 334-amino-acid chain; its full sequence is Serine/Arginine-related protein 53 (334 aa).

A compositionally biased stretch (basic and acidic residues) spans 1-13 (MGRRSSDTEEESR). Disordered regions lie at residues 1–179 (MGRR…HLPP), 201–220 (LKAK…EDQA), and 243–290 (QTFR…SIPT). Basic residues-rich tracts occupy residues 14–24 (SKRKKKHRRRS) and 35–50 (YSRK…KSRS). The span at 51 to 62 (WSRDLQPRSHSY) shows a compositional bias: basic and acidic residues. Over residues 78–118 (SRRKRSRSRSRGRGKSYRVQRSRSKSRTRRSRSRPRLRSHS) the composition is skewed to basic residues. 3 stretches are compositionally biased toward basic and acidic residues: residues 132-166 (RSRD…KRGE), 201-218 (LKAK…KEED), and 247-259 (SSKE…EPSE). Residues 180 to 236 (AEQAKARLQLVLEAAAKADEALKAKERNEEEAKRRKEEDQATLVEQVKRVKEIEAIE) are a coiled coil.

In terms of assembly, interacts (via Arg/Ser-rich domain) with LUC7L3, RBM39 and RSF1. Phosphorylated. Widely expressed. Expressed in brain, spinal cord, cerebellum.

Its subcellular location is the nucleus. The protein localises to the nucleus speckle. The protein resides in the cytoplasm. Has a role in alternative splicing and transcription regulation. Involved in both constitutive and alternative pre-mRNA splicing. May have a role in the recognition of the 3' splice site during the second step of splicing. In Homo sapiens (Human), this protein is Serine/Arginine-related protein 53 (RSRC1).